A 926-amino-acid chain; its full sequence is Isoleucine--tRNA ligase (926 aa).

The 'HIGH' region signature appears at 57 to 67 (PYANGNIHMGH). Position 555 (E555) interacts with L-isoleucyl-5'-AMP. The 'KMSKS' region motif lies at 596–600 (KMSKS). Residue K599 coordinates ATP. Zn(2+) is bound by residues C897, C900, C914, and C917.

The protein belongs to the class-I aminoacyl-tRNA synthetase family. IleS type 1 subfamily. Monomer. Requires Zn(2+) as cofactor.

Its subcellular location is the cytoplasm. The enzyme catalyses tRNA(Ile) + L-isoleucine + ATP = L-isoleucyl-tRNA(Ile) + AMP + diphosphate. Functionally, catalyzes the attachment of isoleucine to tRNA(Ile). As IleRS can inadvertently accommodate and process structurally similar amino acids such as valine, to avoid such errors it has two additional distinct tRNA(Ile)-dependent editing activities. One activity is designated as 'pretransfer' editing and involves the hydrolysis of activated Val-AMP. The other activity is designated 'posttransfer' editing and involves deacylation of mischarged Val-tRNA(Ile). The chain is Isoleucine--tRNA ligase from Natranaerobius thermophilus (strain ATCC BAA-1301 / DSM 18059 / JW/NM-WN-LF).